A 157-amino-acid polypeptide reads, in one-letter code: 6,7-dimethyl-8-ribityllumazine synthase (157 aa).

5-amino-6-(D-ribitylamino)uracil is bound by residues F22, 56–58 (AME), and 80–82 (AVV). Residue 85-86 (ET) coordinates (2S)-2-hydroxy-3-oxobutyl phosphate. Residue H88 is the Proton donor of the active site. Residue F113 coordinates 5-amino-6-(D-ribitylamino)uracil. R127 contacts (2S)-2-hydroxy-3-oxobutyl phosphate.

The protein belongs to the DMRL synthase family.

The enzyme catalyses (2S)-2-hydroxy-3-oxobutyl phosphate + 5-amino-6-(D-ribitylamino)uracil = 6,7-dimethyl-8-(1-D-ribityl)lumazine + phosphate + 2 H2O + H(+). It participates in cofactor biosynthesis; riboflavin biosynthesis; riboflavin from 2-hydroxy-3-oxobutyl phosphate and 5-amino-6-(D-ribitylamino)uracil: step 1/2. Catalyzes the formation of 6,7-dimethyl-8-ribityllumazine by condensation of 5-amino-6-(D-ribitylamino)uracil with 3,4-dihydroxy-2-butanone 4-phosphate. This is the penultimate step in the biosynthesis of riboflavin. The polypeptide is 6,7-dimethyl-8-ribityllumazine synthase (Levilactobacillus brevis (strain ATCC 367 / BCRC 12310 / CIP 105137 / JCM 1170 / LMG 11437 / NCIMB 947 / NCTC 947) (Lactobacillus brevis)).